Reading from the N-terminus, the 108-residue chain is Ig kappa chain V-V region MOPC 149 (108 aa).

The tract at residues 1-23 is framework-1; the sequence is DIQMTQSPDYLSASVGETVTITC. Cysteines 23 and 88 form a disulfide. The tract at residues 24–34 is complementarity-determining-1; that stretch reads RASENIYSYLA. Positions 35–49 are framework-2; that stretch reads WYQQKQGKSPQLLVY. A complementarity-determining-2 region spans residues 50–56; sequence DAKTLVE. The segment at 57 to 88 is framework-3; it reads GVPSRFSGSGSGTQFSLKINSLQPEDFGSYYC. The tract at residues 89–97 is complementarity-determining-3; it reads QHHYGIPFT. Residues 98–108 are framework-4; that stretch reads FGSGTKLEIKR.

The protein is Ig kappa chain V-V region MOPC 149 of Mus musculus (Mouse).